The chain runs to 430 residues: Histidine--tRNA ligase, chloroplastic (430 aa).

It belongs to the class-II aminoacyl-tRNA synthetase family.

It localises to the plastid. It is found in the chloroplast. It catalyses the reaction tRNA(His) + L-histidine + ATP = L-histidyl-tRNA(His) + AMP + diphosphate + H(+). The polypeptide is Histidine--tRNA ligase, chloroplastic (hisS) (Porphyra purpurea (Red seaweed)).